A 412-amino-acid polypeptide reads, in one-letter code: Isocitrate dehydrogenase [NADP] (412 aa).

Threonine 100 lines the NADP(+) pocket. Residues serine 109, asparagine 111, arginine 115, arginine 125, and arginine 149 each contribute to the D-threo-isocitrate site. Aspartate 301 contributes to the Mg(2+) binding site. Residues 333–339 (HGSAPKY), asparagine 346, tyrosine 385, and arginine 389 each bind NADP(+).

Belongs to the isocitrate and isopropylmalate dehydrogenases family. As to quaternary structure, homodimer. Mg(2+) serves as cofactor. Requires Mn(2+) as cofactor.

The catalysed reaction is D-threo-isocitrate + NADP(+) = 2-oxoglutarate + CO2 + NADPH. In terms of biological role, catalyzes the oxidative decarboxylation of isocitrate to 2-oxoglutarate and carbon dioxide with the concomitant reduction of NADP(+). NAD(+) can replace NADP(+) with low efficiency. The sequence is that of Isocitrate dehydrogenase [NADP] from Archaeoglobus fulgidus (strain ATCC 49558 / DSM 4304 / JCM 9628 / NBRC 100126 / VC-16).